The chain runs to 156 residues: Small ribosomal subunit protein uS7 (156 aa).

It belongs to the universal ribosomal protein uS7 family. Part of the 30S ribosomal subunit. Contacts proteins S9 and S11.

Functionally, one of the primary rRNA binding proteins, it binds directly to 16S rRNA where it nucleates assembly of the head domain of the 30S subunit. Is located at the subunit interface close to the decoding center, probably blocks exit of the E-site tRNA. This Clavibacter michiganensis subsp. michiganensis (strain NCPPB 382) protein is Small ribosomal subunit protein uS7.